A 635-amino-acid polypeptide reads, in one-letter code: Rab11 family-interacting protein 4 (635 aa).

One can recognise an EF-hand domain in the interval 49–84 (GQGEEVEKLVKCLDPNDLGRINFKDFCRGVFAMKGC). The Ca(2+) site is built by Asp62, Asn64, Arg68, and Asp73. The interval 82–635 (KGCEELLKDV…HNPSILEIKH (554 aa)) is necessary for interaction with RAB11A, subcellular location, homo- or heterooligomerization. Disordered stretches follow at residues 147-176 (GPQELDMDSPMESSQGPEGSVKGCGEEKEP) and 216-258 (EDYG…QTPR). Residues 216-225 (EDYGEGDDVD) are compositionally biased toward acidic residues. Residues 279–615 (KINLLNDLEA…EEINFRLRQY (337 aa)) are a coiled coil. In terms of domain architecture, FIP-RBD spans 572 to 634 (EAKNLFATQT…DHNPSILEIK (63 aa)).

In terms of assembly, homodimer. Forms a complex with Rab11 (RAB11A or RAB11B) and ARF6. Interacts with RAB11A; the interaction is direct. Forms a heterooligomeric complex with RAB11FIP2, RAB11FIP3 and RAB11FIP5. Interacts with ECPAS. As to expression, strongly expressed in the developing retina. Expressed predominantly in neural tissues.

Its subcellular location is the recycling endosome membrane. It is found in the cleavage furrow. It localises to the midbody. The protein resides in the cytoplasmic vesicle. Functionally, acts as a regulator of endocytic traffic by participating in membrane delivery. Required for the abscission step in cytokinesis, possibly by acting as an 'address tag' delivering recycling endosome membranes to the cleavage furrow during late cytokinesis. May play a role in differentiation during retinal development, in a Rab11-independent manner. The sequence is that of Rab11 family-interacting protein 4 (Rab11fip4) from Mus musculus (Mouse).